A 275-amino-acid chain; its full sequence is Uridine-5'-phosphate dioxygenase (275 aa).

Fe cation is bound by residues histidine 105, aspartate 107, and histidine 247.

Fe(2+) is required as a cofactor.

It carries out the reaction UMP + 2-oxoglutarate + O2 = uridine-5'-aldehyde + succinate + phosphate + CO2. Its pathway is antibiotic biosynthesis. Its activity is regulated as follows. Enhanced by ascorbic acid and inhibited by Zn(2+). Functionally, dioxygenase involved in the biosynthesis of the capuramycin-type nucleoside antibiotic A-102395. Catalyzes the dephosphorylation and oxidation of UMP to generate uridine-5'-aldehyde. Can also use the alternative alpha-keto acids pyruvate and alpha-ketoadipate (2-oxoadipate), with very low efficiency. Cannot use alpha-ketobutyrate, alpha-ketovalerate and oxaloacetate. In Amycolatopsis sp, this protein is Uridine-5'-phosphate dioxygenase.